The sequence spans 138 residues: Gap junction alpha-4 protein (138 aa).

Topologically, residues D1–S16 are cytoplasmic. Residues T17–G39 form a helical membrane-spanning segment. Residues E40 to P74 are Extracellular-facing. A helical membrane pass occupies residues Y75–L97. The Cytoplasmic segment spans residues S98–A138.

Belongs to the connexin family. Alpha-type (group II) subfamily. In terms of assembly, a connexon is composed of a hexamer of connexins.

It localises to the cell membrane. It is found in the cell junction. The protein localises to the gap junction. Its function is as follows. One gap junction consists of a cluster of closely packed pairs of transmembrane channels, the connexons, through which materials of low MW diffuse from one cell to a neighboring cell. The polypeptide is Gap junction alpha-4 protein (GJA4) (Sus scrofa (Pig)).